The chain runs to 559 residues: 2,3-bisphosphoglycerate-independent phosphoglycerate mutase (559 aa).

Positions 28 and 81 each coordinate Mn(2+). Residue S81 is the Phosphoserine intermediate of the active site. Residues H140, 170–171 (RD), R206, R213, 286–289 (RADR), and K361 each bind substrate. Mn(2+)-binding residues include D430, H434, D471, H472, and H501.

This sequence belongs to the BPG-independent phosphoglycerate mutase family. As to quaternary structure, monomer. Requires Mn(2+) as cofactor. Found ubiquitously in germinating seed.

The protein localises to the cytoplasm. It carries out the reaction (2R)-2-phosphoglycerate = (2R)-3-phosphoglycerate. Its pathway is carbohydrate degradation; glycolysis; pyruvate from D-glyceraldehyde 3-phosphate: step 3/5. Functionally, catalyzes the interconversion of 2-phosphoglycerate and 3-phosphoglycerate. This chain is 2,3-bisphosphoglycerate-independent phosphoglycerate mutase, found in Nicotiana tabacum (Common tobacco).